A 502-amino-acid polypeptide reads, in one-letter code: Lysine--tRNA ligase (502 aa).

Mg(2+) contacts are provided by glutamate 412 and glutamate 419.

Belongs to the class-II aminoacyl-tRNA synthetase family. As to quaternary structure, homodimer. Mg(2+) serves as cofactor.

It is found in the cytoplasm. It carries out the reaction tRNA(Lys) + L-lysine + ATP = L-lysyl-tRNA(Lys) + AMP + diphosphate. This is Lysine--tRNA ligase from Nitrosomonas europaea (strain ATCC 19718 / CIP 103999 / KCTC 2705 / NBRC 14298).